A 465-amino-acid polypeptide reads, in one-letter code: Nucleolar and spindle-associated protein 1 (465 aa).

Residues 32 to 61 (ADKLLRALKAHLKNEARKENENQDEIQTSA) are a coiled coil. 3 disordered regions span residues 44–123 (KNEA…QNHS), 148–207 (VEVP…TPNF), and 252–294 (GVPA…GSAK). Residues 56-75 (EIQTSASSCDEPEIQTSSQE) are compositionally biased toward polar residues. Residues 76-86 (QAEREPDDHVT) show a composition bias toward basic and acidic residues. A compositionally biased stretch (basic residues) spans 87 to 96 (KTRGRRKTVH). S152 bears the Phosphoserine mark. The span at 154–166 (PNESQGDENTVSS) shows a compositional bias: polar residues. Over residues 169–179 (HGIDGNEDPRV) the composition is skewed to basic and acidic residues. The residue at position 204 (T204) is a Phosphothreonine. Residues 262–405 (GRLSVACTPG…HKGKLKPWGQ (144 aa)) form an interaction with microtubules region. S265 is modified (phosphoserine). Position 269 is a phosphothreonine (T269). Phosphoserine occurs at positions 272, 292, 299, and 334. The disordered stretch occupies residues 308-338 (SAATKDNEHKRSLTKTPARKSPHVTTSVNTP). Phosphothreonine occurs at positions 337, 361, and 372. A phosphoserine mark is found at S375 and S386. A disordered region spans residues 396–454 (HKGKLKPWGQSKENNSLHEHVNRVSFHKKTYKQPRLQTREEQRKKHERERKEKKEKVLG). A KEN box motif is present at residues 407-413 (KENNSLH). The stretch at 430-457 (RLQTREEQRKKHERERKEKKEKVLGVRR) forms a coiled coil. A compositionally biased stretch (basic and acidic residues) spans 432–453 (QTREEQRKKHERERKEKKEKVL).

Belongs to the NUSAP family. As to quaternary structure, interacts with DNA and microtubules. Microtubule bundling is inhibited by IPO7, KPNA2 and KPNB1 while association with DNA is also inhibited by IPO7 and KPNA2. Ubiquitinated. Ubiquitination by FZR1 may lead to proteasome-dependent degradation of this protein.

It is found in the cytoplasm. The protein localises to the nucleus. The protein resides in the nucleolus. It localises to the cytoskeleton. Its subcellular location is the spindle. It is found in the chromosome. Functionally, microtubule-associated protein with the capacity to bundle and stabilize microtubules. May associate with chromosomes and promote the organization of mitotic spindle microtubules around them. This is Nucleolar and spindle-associated protein 1 (NUSAP1) from Bos taurus (Bovine).